A 254-amino-acid polypeptide reads, in one-letter code: 3-deoxy-manno-octulosonate cytidylyltransferase (254 aa).

Belongs to the KdsB family.

The protein localises to the cytoplasm. It carries out the reaction 3-deoxy-alpha-D-manno-oct-2-ulosonate + CTP = CMP-3-deoxy-beta-D-manno-octulosonate + diphosphate. It participates in nucleotide-sugar biosynthesis; CMP-3-deoxy-D-manno-octulosonate biosynthesis; CMP-3-deoxy-D-manno-octulosonate from 3-deoxy-D-manno-octulosonate and CTP: step 1/1. It functions in the pathway bacterial outer membrane biogenesis; lipopolysaccharide biosynthesis. In terms of biological role, activates KDO (a required 8-carbon sugar) for incorporation into bacterial lipopolysaccharide in Gram-negative bacteria. This Bordetella bronchiseptica (strain ATCC BAA-588 / NCTC 13252 / RB50) (Alcaligenes bronchisepticus) protein is 3-deoxy-manno-octulosonate cytidylyltransferase.